A 234-amino-acid polypeptide reads, in one-letter code: Peptidase E (234 aa).

Residues Ser123, Asp138, and His160 each act as charge relay system in the active site.

This sequence belongs to the peptidase S51 family.

Its subcellular location is the cytoplasm. It carries out the reaction Dipeptidase E catalyzes the hydrolysis of dipeptides Asp-|-Xaa. It does not act on peptides with N-terminal Glu, Asn or Gln, nor does it cleave isoaspartyl peptides.. Functionally, hydrolyzes dipeptides containing N-terminal aspartate residues. May play a role in allowing the cell to use peptide aspartate to spare carbon otherwise required for the synthesis of the aspartate family of amino acids. The polypeptide is Peptidase E (Actinobacillus pleuropneumoniae serotype 5b (strain L20)).